The following is a 328-amino-acid chain: WUSCHEL-related homeobox 6 (328 aa).

Polar residues predominate over residues 1–11 (MEGSSNSPDRQ). The disordered stretch occupies residues 1 to 45 (MEGSSNSPDRQSSGGSPPEERGGGGSGGGGGRSAAGEPVRSRWTP). Gly residues predominate over residues 23–33 (GGGSGGGGGRS). Positions 38 to 102 (PVRSRWTPKP…NRRSRSRRRQ (65 aa)) form a DNA-binding region, homeobox; WUS-type.

This sequence belongs to the WUS homeobox family.

It localises to the nucleus. In terms of biological role, transcription factor which may be involved in developmental processes. In Oryza sativa subsp. japonica (Rice), this protein is WUSCHEL-related homeobox 6 (WOX6).